Reading from the N-terminus, the 246-residue chain is Octanoyltransferase (246 aa).

Positions 46-234 constitute a BPL/LPL catalytic domain; the sequence is GTAGEMVWLV…AFEEVFGAAE (189 aa). Substrate contacts are provided by residues 85–92, 165–167, and 178–180; these read RGGEYTYH, AIG, and GIA. Catalysis depends on Cys-196, which acts as the Acyl-thioester intermediate.

The protein belongs to the LipB family.

Its subcellular location is the cytoplasm. The enzyme catalyses octanoyl-[ACP] + L-lysyl-[protein] = N(6)-octanoyl-L-lysyl-[protein] + holo-[ACP] + H(+). Its pathway is protein modification; protein lipoylation via endogenous pathway; protein N(6)-(lipoyl)lysine from octanoyl-[acyl-carrier-protein]: step 1/2. In terms of biological role, catalyzes the transfer of endogenously produced octanoic acid from octanoyl-acyl-carrier-protein onto the lipoyl domains of lipoate-dependent enzymes. Lipoyl-ACP can also act as a substrate although octanoyl-ACP is likely to be the physiological substrate. The sequence is that of Octanoyltransferase from Chelativorans sp. (strain BNC1).